The sequence spans 234 residues: Uridylate kinase (234 aa).

ATP is bound at residue 9–12 (KLSG). Gly51 provides a ligand contact to UMP. Gly52 and Arg56 together coordinate ATP. Residues Asp71 and 132–139 (CGNPFFTT) contribute to the UMP site. Thr159, Tyr165, and Asp168 together coordinate ATP.

It belongs to the UMP kinase family. As to quaternary structure, homohexamer.

It localises to the cytoplasm. The catalysed reaction is UMP + ATP = UDP + ADP. It participates in pyrimidine metabolism; CTP biosynthesis via de novo pathway; UDP from UMP (UMPK route): step 1/1. Its activity is regulated as follows. Inhibited by UTP. Catalyzes the reversible phosphorylation of UMP to UDP. The chain is Uridylate kinase from Prochlorococcus marinus (strain AS9601).